Reading from the N-terminus, the 167-residue chain is SsrA-binding protein (167 aa).

Residues 144-167 (HDKRAADKEKQSKKEVRSAMAKYQ) are disordered. Residues 146 to 160 (KRAADKEKQSKKEVR) show a composition bias toward basic and acidic residues.

This sequence belongs to the SmpB family.

It localises to the cytoplasm. Required for rescue of stalled ribosomes mediated by trans-translation. Binds to transfer-messenger RNA (tmRNA), required for stable association of tmRNA with ribosomes. tmRNA and SmpB together mimic tRNA shape, replacing the anticodon stem-loop with SmpB. tmRNA is encoded by the ssrA gene; the 2 termini fold to resemble tRNA(Ala) and it encodes a 'tag peptide', a short internal open reading frame. During trans-translation Ala-aminoacylated tmRNA acts like a tRNA, entering the A-site of stalled ribosomes, displacing the stalled mRNA. The ribosome then switches to translate the ORF on the tmRNA; the nascent peptide is terminated with the 'tag peptide' encoded by the tmRNA and targeted for degradation. The ribosome is freed to recommence translation, which seems to be the essential function of trans-translation. The chain is SsrA-binding protein from Synechococcus sp. (strain CC9902).